Consider the following 160-residue polypeptide: Large ribosomal subunit protein bL19 (160 aa).

2 stretches are compositionally biased toward basic and acidic residues: residues 1–15 (MTED…KEES) and 28–39 (ATRETKPKDSPS). The tract at residues 1-44 (MTEDLKNTSPSKEESNEIEESSKATPKATRETKPKDSPSKTKLS) is disordered.

Belongs to the bacterial ribosomal protein bL19 family.

Its function is as follows. This protein is located at the 30S-50S ribosomal subunit interface and may play a role in the structure and function of the aminoacyl-tRNA binding site. The protein is Large ribosomal subunit protein bL19 of Prochlorococcus marinus (strain SARG / CCMP1375 / SS120).